We begin with the raw amino-acid sequence, 220 residues long: Large ribosomal subunit protein uL6c (220 aa).

The transit peptide at methionine 1–cysteine 38 directs the protein to the chloroplast.

Component of the chloroplast large ribosomal subunit (LSU). Mature 70S chloroplast ribosomes of higher plants consist of a small (30S) and a large (50S) subunit. The 30S small subunit contains 1 molecule of ribosomal RNA (16S rRNA) and 24 different proteins. The 50S large subunit contains 3 rRNA molecules (23S, 5S and 4.5S rRNA) and 33 different proteins.

The protein localises to the plastid. Its subcellular location is the chloroplast. Component of the chloroplast ribosome (chloro-ribosome), a dedicated translation machinery responsible for the synthesis of chloroplast genome-encoded proteins, including proteins of the transcription and translation machinery and components of the photosynthetic apparatus. The chain is Large ribosomal subunit protein uL6c (RPL6) from Spinacia oleracea (Spinach).